The primary structure comprises 297 residues: MCAQRVTDTPEVKWQKVLYERQPFPDNYVDQRFLEELRKNIYARKYQYWAVVFESSVVIQQLCSVCVFVVIWWYMDEGLLAPQWLFGTGLASSLVGYVLFDLIDGGDGRKKSGRTRWADLKSTLVFITFTYGFSPVLKTLTESVSTDTIYAMAVFMLLGHLIFFDYGANAAIVSSTLSLNMAIFASVCLASRLPRSLHAFIMVTFAIQIFALWPMLQKKLKAYTPRSYVGVTLLFAFSAFGGLLSISAVGAILFALLLFSISCLCPYYLIHLQLFKENIHGPWDEAEIKEDLSRFLS.

The next 4 helical transmembrane spans lie at 67–87 (VFVVIWWYMDEGLLAPQWLFG), 88–108 (TGLASSLVGYVLFDLIDGGDG), 153–173 (AVFMLLGHLIFFDYGANAAIV), and 239–259 (AFGGLLSISAVGAILFALLLF).

This sequence belongs to the PIGC family. Component of the glycosylphosphatidylinositol-N-acetylglucosaminyltransferase (GPI-GnT) complex composed at least by PIGA, PIGC, PIGH, PIGP, PIGQ, PIGY and DPM2. Interacts with PIGQ. Interacts with the heterodimer PIGA:PIGH.

It is found in the endoplasmic reticulum membrane. Its pathway is glycolipid biosynthesis; glycosylphosphatidylinositol-anchor biosynthesis. In terms of biological role, part of the glycosylphosphatidylinositol-N-acetylglucosaminyltransferase (GPI-GnT) complex that catalyzes the transfer of N-acetylglucosamine from UDP-N-acetylglucosamine to phosphatidylinositol and participates in the first step of GPI biosynthesis. This Mus musculus (Mouse) protein is Phosphatidylinositol N-acetylglucosaminyltransferase subunit C.